We begin with the raw amino-acid sequence, 572 residues long: E3 ubiquitin-protein ligase ZFP91 (572 aa).

Residues 1 to 12 (MPGETEEPRSPE) show a composition bias toward basic and acidic residues. A disordered region spans residues 1–308 (MPGETEEPRS…PRLPKRRKKP (308 aa)). Residues 61-70 (AAAAAAAAAA) show a composition bias toward low complexity. A compositionally biased stretch (basic residues) spans 72–85 (SRRRKAEYPRRRRS). A phosphoserine mark is found at Ser86 and Ser106. Basic and acidic residues predominate over residues 122–131 (LTTDKDPKEE). The segment covering 143-162 (SITTTRASRSWRSSSRTSIS) has biased composition (low complexity). Positions 209 to 225 (SDEEEEEEEEMLISEEE) are enriched in acidic residues. Basic and acidic residues-rich tracts occupy residues 226-247 (IPFKDDPRDETYKPHLERETPK) and 254-271 (KVKEEKEKKEIKVEVEVE). A compositionally biased stretch (acidic residues) spans 272–284 (VKEEENEIREDEE). C2H2-type zinc fingers lie at residues 313 to 338 (VRCEMEGCGTVLAHPRYLQHHIKYQH), 344 to 368 (YVCPHPSCGRLFRLQKQLLRHAKHH), 374 to 396 (YICEYCARAFKSSHNLAVHRMIH), 402 to 424 (LQCEICGFTCRQKASLNWHMKKH), and 432 to 455 (FSCNICGKKFEKKDSVVAHKAKSH). Positions 340–370 (LKKKYVCPHPSCGRLFRLQKQLLRHAKHHTD) are interaction with MAP3K14/NIK.

Belongs to the krueppel C2H2-type zinc-finger protein family. In terms of assembly, interacts with MAP3K14/NIK. Found in all the examined tissues including brain, heart, kidney, lung, liver, spleen, thymus, skeletal muscle, ovary and testis.

It localises to the nucleus. It carries out the reaction S-ubiquitinyl-[E2 ubiquitin-conjugating enzyme]-L-cysteine + [acceptor protein]-L-lysine = [E2 ubiquitin-conjugating enzyme]-L-cysteine + N(6)-ubiquitinyl-[acceptor protein]-L-lysine.. It participates in protein modification; protein ubiquitination. Its function is as follows. Atypical E3 ubiquitin-protein ligase that mediates 'Lys-63'-linked ubiquitination of MAP3K14/NIK, leading to stabilize and activate MAP3K14/NIK. It thereby acts as an activator of the non-canonical NF-kappa-B2/NFKB2 pathway. May also play an important role in cell proliferation and/or anti-apoptosis. This chain is E3 ubiquitin-protein ligase ZFP91 (Zfp91), found in Mus musculus (Mouse).